Reading from the N-terminus, the 510-residue chain is NAD(P) transhydrogenase subunit alpha (510 aa).

Topologically, residues 1–401 (MRIGIPRERL…EEKCTCSPWR (401 aa)) are cytoplasmic. NAD(+)-binding positions include 120-122 (RIS), Val175, 195-197 (DTR), Glu238, and Leu257. Transmembrane regions (helical) follow at residues 402 to 422 (KYAL…VAPK) and 423 to 443 (EFLG…YVVW). Over 444–452 (NVSHALHTP) the chain is Cytoplasmic. Residues 453–473 (LMSVTNAISGIIVVGALLQIG) form a helical membrane-spanning segment. At 474–476 (QGG) the chain is on the periplasmic side. Residues 477–497 (WVSFLSFIAVLIASINIFGGF) traverse the membrane as a helical segment. The Cytoplasmic segment spans residues 498 to 510 (TVTQRMLKMFRKN).

Belongs to the AlaDH/PNT family. As to quaternary structure, heterodimer of an alpha (PntA) and a beta (PntB) chain. Alpha subunit serves as the dimerization unit.

It is found in the cell inner membrane. The catalysed reaction is NAD(+) + NADPH + H(+)(in) = NADH + NADP(+) + H(+)(out). Its function is as follows. The transhydrogenation between NADH and NADP is coupled to respiration and ATP hydrolysis and functions as a proton pump across the membrane. This is NAD(P) transhydrogenase subunit alpha (pntA) from Escherichia coli (strain K12).